A 387-amino-acid chain; its full sequence is Probable tRNA sulfurtransferase (387 aa).

In terms of domain architecture, THUMP spans 67–167 (SLLKNLFTRL…KEHFLIISES (101 aa)). ATP contacts are provided by residues 185–186 (LL), 210–211 (TF), Arg269, Gly287, and Gln296.

This sequence belongs to the ThiI family.

It is found in the cytoplasm. It catalyses the reaction [ThiI sulfur-carrier protein]-S-sulfanyl-L-cysteine + a uridine in tRNA + 2 reduced [2Fe-2S]-[ferredoxin] + ATP + H(+) = [ThiI sulfur-carrier protein]-L-cysteine + a 4-thiouridine in tRNA + 2 oxidized [2Fe-2S]-[ferredoxin] + AMP + diphosphate. It carries out the reaction [ThiS sulfur-carrier protein]-C-terminal Gly-Gly-AMP + S-sulfanyl-L-cysteinyl-[cysteine desulfurase] + AH2 = [ThiS sulfur-carrier protein]-C-terminal-Gly-aminoethanethioate + L-cysteinyl-[cysteine desulfurase] + A + AMP + 2 H(+). Its pathway is cofactor biosynthesis; thiamine diphosphate biosynthesis. Its function is as follows. Catalyzes the ATP-dependent transfer of a sulfur to tRNA to produce 4-thiouridine in position 8 of tRNAs, which functions as a near-UV photosensor. Also catalyzes the transfer of sulfur to the sulfur carrier protein ThiS, forming ThiS-thiocarboxylate. This is a step in the synthesis of thiazole, in the thiamine biosynthesis pathway. The sulfur is donated as persulfide by IscS. The protein is Probable tRNA sulfurtransferase of Mycoplasma pneumoniae (strain ATCC 29342 / M129 / Subtype 1) (Mycoplasmoides pneumoniae).